The chain runs to 106 residues: BLOC-1-related complex subunit 7 (106 aa).

It belongs to the BORCS7 family. Component of the BLOC-one-related complex (BORC) which is composed of BLOC1S1, BLOC1S2, BORCS5, BORCS6, BORCS7, BORCS8, KXD1 and SNAPIN.

It is found in the lysosome membrane. Its function is as follows. As part of the BORC complex may play a role in lysosomes movement and localization at the cell periphery. Associated with the cytosolic face of lysosomes, the BORC complex may recruit ARL8B and couple lysosomes to microtubule plus-end-directed kinesin motor. The protein is BLOC-1-related complex subunit 7 of Pongo abelii (Sumatran orangutan).